Consider the following 218-residue polypeptide: Variable small protein 8 (218 aa).

Residues 1 to 18 (MRKRISAIIMTLFMVFMS) form the signal peptide. Cys-19 carries the N-palmitoyl cysteine lipid modification. Cys-19 carries the S-diacylglycerol cysteine lipid modification.

It belongs to the variable small protein (Vsp) family.

It is found in the cell outer membrane. In terms of biological role, the Vlp and Vsp proteins are antigenically distinct proteins, only one vlp or vsp gene is transcriptionally active at any one time. Switching between these genes is a mechanism of host immune response evasion. The chain is Variable small protein 8 from Borrelia hermsii.